A 619-amino-acid chain; its full sequence is 1-deoxy-D-xylulose-5-phosphate synthase (619 aa).

Residues histidine 74 and 115–117 (GHS) contribute to the thiamine diphosphate site. Aspartate 146 provides a ligand contact to Mg(2+). Residues 147 to 148 (GA), asparagine 175, tyrosine 285, and glutamate 365 contribute to the thiamine diphosphate site. Position 175 (asparagine 175) interacts with Mg(2+).

The protein belongs to the transketolase family. DXPS subfamily. Homodimer. The cofactor is Mg(2+). Thiamine diphosphate is required as a cofactor.

It carries out the reaction D-glyceraldehyde 3-phosphate + pyruvate + H(+) = 1-deoxy-D-xylulose 5-phosphate + CO2. Its pathway is metabolic intermediate biosynthesis; 1-deoxy-D-xylulose 5-phosphate biosynthesis; 1-deoxy-D-xylulose 5-phosphate from D-glyceraldehyde 3-phosphate and pyruvate: step 1/1. Functionally, catalyzes the acyloin condensation reaction between C atoms 2 and 3 of pyruvate and glyceraldehyde 3-phosphate to yield 1-deoxy-D-xylulose-5-phosphate (DXP). This chain is 1-deoxy-D-xylulose-5-phosphate synthase, found in Clostridium perfringens (strain 13 / Type A).